A 405-amino-acid polypeptide reads, in one-letter code: Deoxyguanosinetriphosphate triphosphohydrolase-like protein (405 aa).

The HD domain maps to 75–219 (RLTHTIEVAQ…AAIADDIAYN (145 aa)).

The protein belongs to the dGTPase family. Type 2 subfamily.

The polypeptide is Deoxyguanosinetriphosphate triphosphohydrolase-like protein (Agrobacterium fabrum (strain C58 / ATCC 33970) (Agrobacterium tumefaciens (strain C58))).